The primary structure comprises 388 residues: Beta-1,4-galactosyltransferase 5 (388 aa).

Topologically, residues 1–14 (MRVRRGLLRLPRRS) are cytoplasmic. The chain crosses the membrane as a helical; Signal-anchor for type II membrane protein span at residues 15-35 (LLAALFFFSLSSSLLYFVYVA). Topologically, residues 36 to 388 (PGIVNTYLFM…TPELAQVTEY (353 aa)) are lumenal. N-linked (GlcNAc...) asparagine glycosylation is found at Asn-77, Asn-81, Asn-90, Asn-111, and Asn-128. Cysteines 114 and 158 form a disulfide. Residues 169–173 (PFRNR), 208–210 (FNR), 235–236 (VD), Tyr-264, and Trp-296 each bind UDP-alpha-D-galactose. Cys-229 and Cys-248 are oxidised to a cystine. Position 236 (Asp-236) interacts with Mn(2+). 298 to 301 (GEDD) is an N-acetyl-D-glucosamine binding site. 329–330 (YH) lines the UDP-alpha-D-galactose pocket. Residue Arg-340 participates in N-acetyl-D-glucosamine binding. Residues Asn-364 and Asn-373 are each glycosylated (N-linked (GlcNAc...) asparagine).

This sequence belongs to the glycosyltransferase 7 family. In terms of assembly, (Microbial infection) Interacts with porcine reproductive and respiratory syndrome virus GP5. Mn(2+) is required as a cofactor.

Its subcellular location is the golgi apparatus. It localises to the golgi stack membrane. The catalysed reaction is a beta-D-glucosyl-(1&lt;-&gt;1')-N-acylsphing-4-enine + UDP-alpha-D-galactose = a beta-D-Gal-(1-&gt;4)-beta-D-Glc-(1&lt;-&gt;1)-Cer(d18:1(4E)) + UDP + H(+). Its pathway is protein modification; protein glycosylation. It functions in the pathway sphingolipid metabolism. In terms of biological role, catalyzes the synthesis of lactosylceramide (LacCer) via the transfer of galactose from UDP-galactose to glucosylceramide (GlcCer). LacCer is the starting point in the biosynthesis of all gangliosides (membrane-bound glycosphingolipids) which play pivotal roles in the CNS including neuronal maturation and axonal and myelin formation. Plays a role in the glycosylation of BMPR1A and regulation of its protein stability. Essential for extraembryonic development during early embryogenesis. Functionally, (Microbial infection) May play a role in the glycosylation of porcine reproductive and respiratory syndrome virus GP5 protein and may be involved in the regulation of viral proliferation. In Sus scrofa (Pig), this protein is Beta-1,4-galactosyltransferase 5 (B4GALT5).